An 80-amino-acid chain; its full sequence is Small ribosomal subunit protein bS16 (80 aa).

Belongs to the bacterial ribosomal protein bS16 family.

The chain is Small ribosomal subunit protein bS16 from Blochmanniella pennsylvanica (strain BPEN).